Here is an 801-residue protein sequence, read N- to C-terminus: K(+)-insensitive pyrophosphate-energized proton pump (801 aa).

A run of 5 helical transmembrane segments spans residues 27–47 (VIVMVIGVVALAALVVAGILV), 81–101 (TLGVFAVVVFFLLMLLPADDW), 109–129 (VFFLIGALFSATTGYTGMWLA), 170–190 (GVVGMFTVGLGLLGASCVVLV), and 201–221 (GFGLGAALIAMFMRVGGGIFT). Lysine 222 is a binding site for substrate. 4 residues coordinate Mg(2+): aspartate 225, aspartate 229, asparagine 252, and aspartate 255. A run of 7 helical transmembrane segments spans residues 261–281 (AGMAADLFESYAVTLVAALIL), 292–312 (AFPLIVPAIGVLTAMIGIFAV), 328–348 (GFFVSAVFSLALVAVAVYVYL), 372–392 (ILAMVAVAIGIVLAALIQQLT), 406–426 (IGKSSLTGAATVVLAGISVGL), 429–449 (AVYTALLIGLGVYGAFLLGGT), and 453–473 (LALFAVALAGTGLLTTVGVIV). Mg(2+) is bound at residue aspartate 483. Helical transmembrane passes span 515-535 (AITKGIAIATAVLAASALFGS), 571-591 (VGLIAGAAVVFLFSGLAINAV), 641-661 (LLAVLAPIAIGFTLGVGALGA), and 663-683 (LAGAIGTGTLMAVFLANSGGA). The Ca(2+) site is built by aspartate 685, aspartate 711, and aspartate 715. Lysine 718 contacts substrate. A run of 2 helical transmembrane segments spans residues 724 to 744 (AINPLLKVMNLVALLIAPAVV) and 754 to 774 (LGVRIAIAVLSILVIVGAVYI).

It belongs to the H(+)-translocating pyrophosphatase (TC 3.A.10) family. K(+)-insensitive subfamily. Homodimer. Mg(2+) serves as cofactor.

It is found in the cell membrane. It carries out the reaction diphosphate + H2O + H(+)(in) = 2 phosphate + 2 H(+)(out). Proton pump that utilizes the energy of pyrophosphate hydrolysis as the driving force for proton movement across the membrane. Generates a proton motive force. In Streptomyces avermitilis (strain ATCC 31267 / DSM 46492 / JCM 5070 / NBRC 14893 / NCIMB 12804 / NRRL 8165 / MA-4680), this protein is K(+)-insensitive pyrophosphate-energized proton pump.